A 199-amino-acid chain; its full sequence is N-(5'-phosphoribosyl)anthranilate isomerase (199 aa).

Belongs to the TrpF family.

It catalyses the reaction N-(5-phospho-beta-D-ribosyl)anthranilate = 1-(2-carboxyphenylamino)-1-deoxy-D-ribulose 5-phosphate. Its pathway is amino-acid biosynthesis; L-tryptophan biosynthesis; L-tryptophan from chorismate: step 3/5. The protein is N-(5'-phosphoribosyl)anthranilate isomerase of Streptococcus pneumoniae (strain Hungary19A-6).